The chain runs to 117 residues: Immunoglobulin heavy variable 3-7 (117 aa).

The signal sequence occupies residues 1–19; that stretch reads MELGLSWVFLVAILEGVQC. Residues 20-44 form a framework-1 region; sequence EVQLVESGGGLVQPGGSLRLSCAAS. The Ig-like domain maps to 20–117; the sequence is EVQLVESGGG…EDTAVYYCAR (98 aa). C41 and C115 are joined by a disulfide. Residues 45–52 form a complementarity-determining-1 region; it reads GFTFSSYW. Residues 53–69 are framework-2; the sequence is MSWVRQAPGKGLEWVAN. The tract at residues 70 to 77 is complementarity-determining-2; that stretch reads IKQDGSEK. The segment at 78 to 115 is framework-3; the sequence is YYVDSVKGRFTISRDNAKNSLYLQMNSLRAEDTAVYYC. The interval 116–117 is complementarity-determining-3; sequence AR.

In terms of assembly, immunoglobulins are composed of two identical heavy chains and two identical light chains; disulfide-linked.

The protein localises to the secreted. It is found in the cell membrane. Its function is as follows. V region of the variable domain of immunoglobulin heavy chains that participates in the antigen recognition. Immunoglobulins, also known as antibodies, are membrane-bound or secreted glycoproteins produced by B lymphocytes. In the recognition phase of humoral immunity, the membrane-bound immunoglobulins serve as receptors which, upon binding of a specific antigen, trigger the clonal expansion and differentiation of B lymphocytes into immunoglobulins-secreting plasma cells. Secreted immunoglobulins mediate the effector phase of humoral immunity, which results in the elimination of bound antigens. The antigen binding site is formed by the variable domain of one heavy chain, together with that of its associated light chain. Thus, each immunoglobulin has two antigen binding sites with remarkable affinity for a particular antigen. The variable domains are assembled by a process called V-(D)-J rearrangement and can then be subjected to somatic hypermutations which, after exposure to antigen and selection, allow affinity maturation for a particular antigen. This chain is Immunoglobulin heavy variable 3-7, found in Homo sapiens (Human).